A 440-amino-acid polypeptide reads, in one-letter code: Probable secretory pathway GDP dissociation inhibitor 1 (440 aa).

It belongs to the Rab GDI family.

The polypeptide is Probable secretory pathway GDP dissociation inhibitor 1 (gdi1) (Schizosaccharomyces pombe (strain 972 / ATCC 24843) (Fission yeast)).